The following is a 588-amino-acid chain: DELLA protein GAI (588 aa).

Residues Met1–Ala15 show a composition bias toward basic and acidic residues. Residues Met1–Asp38 are disordered. Positions Asp42–Ala46 match the DELLA motif motif. Residues Gly152–Met177 form a disordered region. Positions Thr166–Met177 are enriched in low complexity. Positions Val190 to Lys574 constitute a GRAS domain. The interval Val197–Ile251 is leucine repeat I (LRI). The interval Gln269 to Gly334 is VHIID. A VHIID motif is present at residues Val300–Asp304. The segment at Gln348–Thr380 is leucine repeat II (LRII). A PFYRE region spans residues Val392 to Asn495. The LXXLL motif signature appears at Leu400–Leu404. The interval Ala498–Lys574 is SAW.

Belongs to the GRAS family. DELLA subfamily. Post-translationally, phosphorylated. Ubiquitinated. Upon GA application it is ubiquitinated, leading to its subsequent degradation. Expressed in both vegetative and reproductive tissues.

It localises to the nucleus. Probable transcriptional regulator that acts as a repressor of the gibberellin (GA) signaling pathway. Probably acts by participating in large multiprotein complexes that repress transcription of GA-inducible genes. Upon GA application, it is degraded by the proteasome, allowing the GA signaling pathway. Its degradation is not essential for germination. The chain is DELLA protein GAI (GAI) from Solanum lycopersicum (Tomato).